A 542-amino-acid polypeptide reads, in one-letter code: Sodium/hydrogen exchanger 8 (542 aa).

11 helical membrane passes run 55-75 (EQSS…CIIL), 79-99 (LIRY…LGIL), 118-138 (EEMF…IFES), 151-171 (IGSI…VVGG), 186-206 (NMTD…VATI), 256-276 (TFLQ…ALGT), 306-326 (AYLP…VFAF), 349-369 (LVLF…NFFR), 374-394 (TPKM…PYAL), 412-432 (TTIV…MPLI), and 446-466 (NKKD…ESEH). The residue at position 471 (Thr471) is a Phosphothreonine. Residues Ser532 and Ser534 each carry the phosphoserine modification.

The protein belongs to the monovalent cation:proton antiporter 1 (CPA1) transporter (TC 2.A.36) family.

The protein resides in the golgi apparatus membrane. The protein localises to the golgi apparatus. It localises to the trans-Golgi network membrane. It is found in the endosome. Its subcellular location is the multivesicular body membrane. The protein resides in the apical cell membrane. The protein localises to the cytoplasmic vesicle. It localises to the secretory vesicle. It is found in the acrosome. The catalysed reaction is Na(+)(in) + H(+)(out) = Na(+)(out) + H(+)(in). Its function is as follows. Na(+)/H(+) antiporter. Mediates the electoneutral exchange of intracellular H(+) ions for extracellular Na(+) in 1:1 stoichiometry. Acts as an Na(+)/H(+) exchanger in the trans-Golgi. Contributes to the regulation of pH regulation of Golgi apparatus, and consequently, in protein trafficking and endosomal morphology. In germ cells, plays a crucial role in acrosome biogenesis and sperm development, probably by playing a role in the fusion of the Golgi-derived vesicles that form the acrosomal cap. Can also be active at the cell surface of specialized cells. In the small intestine, at the cell membrane, plays a major physiological role in transepithelial absorption of Na(+) and regulates intracellular pH homeostasis of intestinal epithelial cells. Acts as an important regulator of mucosal integrity in the intestine and in the stomach, could mediate the pH fluctuation necessary for mucin exocytosis or assist membrane trafficking of other proteins. Plays a role in photoreceptor survival and in the maintenance of intracellular pH homeostasis in retinal pigment epithelium (RPE cells). The protein is Sodium/hydrogen exchanger 8 (SLC9A8) of Macaca fascicularis (Crab-eating macaque).